The following is a 269-amino-acid chain: Putative pyruvate, phosphate dikinase regulatory protein (269 aa).

153–160 serves as a coordination point for ADP; that stretch reads GVSRTSKT.

It belongs to the pyruvate, phosphate/water dikinase regulatory protein family. PDRP subfamily.

The enzyme catalyses N(tele)-phospho-L-histidyl/L-threonyl-[pyruvate, phosphate dikinase] + ADP = N(tele)-phospho-L-histidyl/O-phospho-L-threonyl-[pyruvate, phosphate dikinase] + AMP + H(+). It carries out the reaction N(tele)-phospho-L-histidyl/O-phospho-L-threonyl-[pyruvate, phosphate dikinase] + phosphate + H(+) = N(tele)-phospho-L-histidyl/L-threonyl-[pyruvate, phosphate dikinase] + diphosphate. Bifunctional serine/threonine kinase and phosphorylase involved in the regulation of the pyruvate, phosphate dikinase (PPDK) by catalyzing its phosphorylation/dephosphorylation. The chain is Putative pyruvate, phosphate dikinase regulatory protein from Pediococcus pentosaceus (strain ATCC 25745 / CCUG 21536 / LMG 10740 / 183-1w).